Reading from the N-terminus, the 456-residue chain is Acid sphingomyelinase-like phosphodiesterase 3b (456 aa).

The N-terminal stretch at 1–18 is a signal peptide; it reads MTLLGWLIFLAPWGVAGA. Zn(2+)-binding residues include aspartate 28 and histidine 30. A glycan (N-linked (GlcNAc...) asparagine) is linked at asparagine 34. Cysteine 45 and cysteine 64 are disulfide-bonded. An N-linked (GlcNAc...) asparagine glycan is attached at asparagine 72. A Zn(2+)-binding site is contributed by aspartate 93. N-linked (GlcNAc...) asparagine glycosylation occurs at asparagine 100. Asparagine 134 is a Zn(2+) binding site. Residues asparagine 164 and asparagine 223 are each glycosylated (N-linked (GlcNAc...) asparagine). Zn(2+)-binding residues include histidine 236, histidine 277, and histidine 279. 2 cysteine pairs are disulfide-bonded: cysteine 405–cysteine 409 and cysteine 415–cysteine 428.

The protein belongs to the acid sphingomyelinase family. Interacts with TLR4, TLR7, TLR8 and TLR9. Zn(2+) serves as cofactor. N-glycosylated. As to expression, macrophages and dendritic cells.

It localises to the secreted. The protein resides in the cell membrane. Functionally, lipid-modulating phosphodiesterase. Active on the surface of macrophages and dendritic cells and strongly influences macrophage lipid composition and membrane fluidity. Acts as a negative regulator of Toll-like receptor signaling. Has in vitro phosphodiesterase activity, but the physiological substrate is unknown. Lacks activity with phosphocholine-containing lipids, but can cleave CDP-choline, and can release phosphate from ATP and ADP (in vitro). In Mus musculus (Mouse), this protein is Acid sphingomyelinase-like phosphodiesterase 3b (Smpdl3b).